A 399-amino-acid polypeptide reads, in one-letter code: Glutathione S-transferase LANCL1 (399 aa).

Position 2 is an N-acetylalanine (alanine 2). The residue at position 142 (lysine 142) is an N6-acetyllysine. Residue cysteine 276 coordinates Zn(2+). Lysine 317 provides a ligand contact to glutathione. Zn(2+)-binding residues include cysteine 322 and histidine 323. 364 to 367 (RTPD) provides a ligand contact to glutathione.

It belongs to the LanC-like protein family. As to quaternary structure, interacts with the C-terminal of STOM. Interacts with the EPS8 SH3 domain. Interaction with EPS8 is inhibited by glutathione binding. (Microbial infection) Interacts with P.falciparum SBP1. Detected in erythrocytes, brain, kidney, testis, ovary, heart, lung, placenta and spleen (at protein level). Ubiquitous. Strongly expressed in brain, spinal cord, pituitary gland, kidney, heart, skeletal muscle, pancreas, ovary and testis.

It is found in the cytoplasm. Its subcellular location is the cell membrane. It carries out the reaction RX + glutathione = an S-substituted glutathione + a halide anion + H(+). The catalysed reaction is 1-chloro-2,4-dinitrobenzene + glutathione = 2,4-dinitrophenyl-S-glutathione + chloride + H(+). In terms of biological role, functions as a glutathione transferase. Catalyzes conjugation of the glutathione (GSH) to artificial substrates 1-chloro-2,4-dinitrobenzene (CDNB) and p-nitrophenyl acetate. Mitigates neuronal oxidative stress during normal postnatal development and in response to oxidative stresses probably through GSH antioxidant defense mechanism. May play a role in EPS8 signaling. Binds glutathione. The chain is Glutathione S-transferase LANCL1 from Homo sapiens (Human).